The chain runs to 1270 residues: DNA-directed RNA polymerase subunit beta (1270 aa).

It belongs to the RNA polymerase beta chain family. As to quaternary structure, the RNAP catalytic core consists of 2 alpha, 1 beta, 1 beta' and 1 omega subunit. When a sigma factor is associated with the core the holoenzyme is formed, which can initiate transcription.

The catalysed reaction is RNA(n) + a ribonucleoside 5'-triphosphate = RNA(n+1) + diphosphate. In terms of biological role, DNA-dependent RNA polymerase catalyzes the transcription of DNA into RNA using the four ribonucleoside triphosphates as substrates. This Bacteroides thetaiotaomicron (strain ATCC 29148 / DSM 2079 / JCM 5827 / CCUG 10774 / NCTC 10582 / VPI-5482 / E50) protein is DNA-directed RNA polymerase subunit beta.